The chain runs to 117 residues: UPF0102 protein RHOS4_03930 (117 aa).

It belongs to the UPF0102 family.

This chain is UPF0102 protein RHOS4_03930, found in Cereibacter sphaeroides (strain ATCC 17023 / DSM 158 / JCM 6121 / CCUG 31486 / LMG 2827 / NBRC 12203 / NCIMB 8253 / ATH 2.4.1.) (Rhodobacter sphaeroides).